The following is a 374-amino-acid chain: Putative zinc metalloprotease R01501 (374 aa).

Zn(2+) is bound at residue His-26. Residue Glu-27 is part of the active site. Zn(2+) is bound at residue His-30. The next 4 membrane-spanning stretches (helical) occupy residues 36 to 55, 112 to 134, 301 to 323, and 348 to 367; these read WSGI…LFGW, AATV…AVLF, VLNF…VPVL, and LAFR…AAWN. A PDZ domain is found at 126 to 199; it reads AIAIFAVLFS…LPITVRIERE (74 aa).

The protein belongs to the peptidase M50B family. The cofactor is Zn(2+).

The protein resides in the cell inner membrane. In Rhizobium meliloti (strain 1021) (Ensifer meliloti), this protein is Putative zinc metalloprotease R01501.